The primary structure comprises 890 residues: MTVEQLSPHSKSHPLTGEEIRTAFLHFFAERGHQVLPSASLVPDDPTVLLTIAGMLPFKPVFLGHEERPSSRVVTSQKCIRTNDIENVGRTARHQTYFEMLGNFSFGDYFKKEAIQWAWELSTKTFGLDPKYLVVSIFREDDDAYEIWRNIIGVNPDRIIRMDEADNFWSSGPTGPCGPCSELYYDFNPELGNHCIDLEDDTRFIEFYNLVFMEFNRDSTGRLSSLSNCNIDTGMGLERMAQILQKVPNNYETDLIYPLLEKVAYLVGVDYQKTDKKTRISYKVIGDHIRACVQLISDGVSASNLGRGYILRRLLRRIVRHGRLLGIPKPFLIDLGEVAISLMKSTYPQLLERRDVILKELQREELRFLETLERGERLLADLLSNNPKEISGEQAFELYDTYGFPLELTQEIAEENSIEVDLKAFEKAMQRQRIRAKAASTTIDLTLQDTLDKAVRELKPTNFKGYECLTETSTVQAIFINGELAQEAQENDVIQVALDITPFYGESGGQIGDTGILFKESVTNCLIEIDSVIRNNDVFVHRGIVKNGRLQVGDIIQSQVHHINRRRAQINHTATHLLQASLKEIVGSEISQAGSLVSFERLRFDFHCSSPVSSEELEKVEKKINLWISESHSLVVKEMKIDDAKQAGAVAMFGEKYGTLVRVVDVPGVSMELCGGTHVANTADIGAFKIVGESGIAAGIRRIEAVAGPGVFDYFNARDSVVRILSERFKVQSNEIVDRVIALQDEVKLLGKSLIKAQEEIAFAKTSALVSKATAIKSSHYIIHRLDGVPSEALQSAAKVLVDQLGDCSAVLLAGTPTQSDPNKVILVAAFGAKTVAHGLHAGKFLGPIAKMCGGGGGGRPNFAQAGGRDAKPLDKALDLAREQLMGALL.

Residues His-572, His-576, Cys-674, and His-678 each coordinate Zn(2+).

It belongs to the class-II aminoacyl-tRNA synthetase family. Zn(2+) serves as cofactor.

The protein resides in the cytoplasm. The enzyme catalyses tRNA(Ala) + L-alanine + ATP = L-alanyl-tRNA(Ala) + AMP + diphosphate. Functionally, catalyzes the attachment of alanine to tRNA(Ala) in a two-step reaction: alanine is first activated by ATP to form Ala-AMP and then transferred to the acceptor end of tRNA(Ala). Also edits incorrectly charged Ser-tRNA(Ala) and Gly-tRNA(Ala) via its editing domain. The chain is Alanine--tRNA ligase from Prochlorococcus marinus (strain MIT 9211).